Reading from the N-terminus, the 448-residue chain is MALEKLGQALNSALKKLARSSTVDEATIKEIVRDIQRALLQADVNVKLVLQLTKQIQKRALEEEPPAGVSKKEHIIKIVYEELTKFLGTEAKPLEIKHKPTVILTVGIQGSGKTTSVAKLARYLQKRGYKVGVVCSDTWRPGAYYQLRQLLDPFGIEVFGDPEEKDAVKLAREGVEHFREKGVDVIIVDSAGRHKEEKGLIEEMRQISEAIKPHEVILVIDGTIGQQAYNQAMAFKEATPIGSIIVTKLDGSAKGGGALSAVAATGAPIKFIGTGERIDDLEPFDPKRFVSRLLGLGDIQGLLEKIEELQKEQEFREEDMEKFLRGKFNLKDMYAQLEAMQKMGPLKQILQMIPGLGYSLPEDAVRVGEEKLKRYKVIMDSMTEEELENPEIINYSRIKRIARGSGATTAEVRELLNQYNQMKKMFKSLNKRKLAKMAKKFNFGGLGI.

GTP-binding positions include 107 to 114, 189 to 193, and 247 to 250; these read GIQGSGKT, DSAGR, and TKLD.

Belongs to the GTP-binding SRP family. SRP54 subfamily. Part of the signal recognition particle protein translocation system, which is composed of SRP and FtsY. Archaeal SRP consists of a 7S RNA molecule of 300 nucleotides and two protein subunits: SRP54 and SRP19.

It is found in the cytoplasm. It carries out the reaction GTP + H2O = GDP + phosphate + H(+). Its function is as follows. Involved in targeting and insertion of nascent membrane proteins into the cytoplasmic membrane. Binds to the hydrophobic signal sequence of the ribosome-nascent chain (RNC) as it emerges from the ribosomes. The SRP-RNC complex is then targeted to the cytoplasmic membrane where it interacts with the SRP receptor FtsY. In Thermococcus kodakarensis (strain ATCC BAA-918 / JCM 12380 / KOD1) (Pyrococcus kodakaraensis (strain KOD1)), this protein is Signal recognition particle 54 kDa protein.